Here is a 497-residue protein sequence, read N- to C-terminus: 3-octaprenyl-4-hydroxybenzoate carboxy-lyase (497 aa).

Position 175 (Asn175) interacts with Mn(2+). Prenylated FMN is bound by residues 178–180, 192–194, and 197–198; these read IYR, RWL, and RG. Glu241 lines the Mn(2+) pocket. The active-site Proton donor is Asp290.

This sequence belongs to the UbiD family. As to quaternary structure, homohexamer. Requires prenylated FMN as cofactor. It depends on Mn(2+) as a cofactor.

It is found in the cell membrane. The enzyme catalyses a 4-hydroxy-3-(all-trans-polyprenyl)benzoate + H(+) = a 2-(all-trans-polyprenyl)phenol + CO2. The protein operates within cofactor biosynthesis; ubiquinone biosynthesis. Its function is as follows. Catalyzes the decarboxylation of 3-octaprenyl-4-hydroxy benzoate to 2-octaprenylphenol, an intermediate step in ubiquinone biosynthesis. In Shigella dysenteriae serotype 1 (strain Sd197), this protein is 3-octaprenyl-4-hydroxybenzoate carboxy-lyase.